The primary structure comprises 251 residues: Haloacid dehalogenase-like hydrolase domain-containing protein 3 (251 aa).

Lysine 15 is subject to N6-acetyllysine; alternate. Lysine 15 is modified (N6-succinyllysine; alternate). Lysine 130 is modified (N6-acetyllysine).

This sequence belongs to the HAD-like hydrolase superfamily.

This chain is Haloacid dehalogenase-like hydrolase domain-containing protein 3 (HDHD3), found in Bos taurus (Bovine).